Here is a 389-residue protein sequence, read N- to C-terminus: PqqA peptide cyclase (389 aa).

The Radical SAM core domain occupies 19–234; that stretch reads VGLPLWLLAE…TNEYRARLEA (216 aa). 3 residues coordinate [4Fe-4S] cluster: Cys33, Cys37, and Cys40.

Belongs to the radical SAM superfamily. PqqE family. In terms of assembly, interacts with PqqD. The interaction is necessary for activity of PqqE. [4Fe-4S] cluster serves as cofactor.

It carries out the reaction [PQQ precursor protein] + S-adenosyl-L-methionine = E-Y cross-linked-[PQQ precursor protein] + 5'-deoxyadenosine + L-methionine + H(+). It participates in cofactor biosynthesis; pyrroloquinoline quinone biosynthesis. Catalyzes the cross-linking of a glutamate residue and a tyrosine residue in the PqqA protein as part of the biosynthesis of pyrroloquinoline quinone (PQQ). The protein is PqqA peptide cyclase of Pseudomonas syringae pv. syringae (strain B728a).